We begin with the raw amino-acid sequence, 330 residues long: Putative [LysW]-L-2-aminoadipate/[LysW]-L-glutamate phosphate reductase (330 aa).

Residues 10 to 13 and 34 to 36 each bind NADP(+); these read SGYI and SRK. The active site involves C142. N297 is a binding site for NADP(+).

The protein belongs to the NAGSA dehydrogenase family. Type 1 subfamily. LysY sub-subfamily.

The protein localises to the cytoplasm. It catalyses the reaction [amino-group carrier protein]-C-terminal-N-(1-carboxy-5-oxopentan-1-yl)-L-glutamine + phosphate + NADP(+) = [amino-group carrier protein]-C-terminal-N-(1-carboxy-5-phosphooxy-5-oxopentan-1-yl)-L-glutamine + NADPH + H(+). The enzyme catalyses [amino-group carrier protein]-C-terminal-gamma-(L-glutamyl-5-semialdehyde)-L-glutamate + phosphate + NADP(+) = [amino-group carrier protein]-C-terminal-gamma-(5-phospho-L-glutamyl)-L-glutamate + NADPH + H(+). It functions in the pathway amino-acid biosynthesis; L-lysine biosynthesis via AAA pathway; L-lysine from L-alpha-aminoadipate (Thermus route): step 3/5. It participates in amino-acid biosynthesis; L-arginine biosynthesis. Involved in both the arginine and lysine biosynthetic pathways. The chain is Putative [LysW]-L-2-aminoadipate/[LysW]-L-glutamate phosphate reductase from Pyrococcus abyssi (strain GE5 / Orsay).